The chain runs to 297 residues: UDP-N-acetylglucosamine transporter TMEM241 (297 aa).

10 helical membrane-spanning segments follow: residues 7 to 29 (LLGL…VLSV), 32 to 52 (FTYP…LLHM), 69 to 89 (VLIW…GSKA), 93 to 113 (LAVP…CGYQ), 121 to 141 (TSLS…CLPF), 146 to 166 (FDPD…SYKI), 187 to 207 (IFSM…FGAL), 211 to 231 (FLYF…GFFL), 250 to 270 (WILC…DMAL), and 271 to 291 (TKAT…LVFS).

This sequence belongs to the nucleotide-sugar transporter family. SLC35A subfamily. In terms of tissue distribution, widely expressed with high expression in lung.

The protein resides in the golgi apparatus. Its subcellular location is the cis-Golgi network membrane. Functionally, golgi-localized UDP-N-acetylglucosamine (UDP-GlcNAc) transporter that transports UDP-N-acetylglucosamine into Golgi lumen. Contributes to lysosomal targeting of NPC2, a key protein required for lysosomal cholesterol exiting, and that utilizes the mannose-6-phosphate (M6P) modification pathway for its lysosomal targeting. The polypeptide is UDP-N-acetylglucosamine transporter TMEM241 (Tmem241) (Mus musculus (Mouse)).